The sequence spans 215 residues: Mediator of RNA polymerase II transcription subunit 20 (215 aa).

The protein belongs to the Mediator complex subunit 20 family. As to quaternary structure, component of the Mediator complex.

It is found in the nucleus. Functionally, component of the Mediator complex, a coactivator involved in the regulated transcription of nearly all RNA polymerase II-dependent genes. Mediator functions as a bridge to convey information from gene-specific regulatory proteins to the basal RNA polymerase II transcription machinery. Mediator is recruited to promoters by direct interactions with regulatory proteins and serves as a scaffold for the assembly of a functional preinitiation complex with RNA polymerase II and the general transcription factors. The polypeptide is Mediator of RNA polymerase II transcription subunit 20 (SRB2) (Candida glabrata (strain ATCC 2001 / BCRC 20586 / JCM 3761 / NBRC 0622 / NRRL Y-65 / CBS 138) (Yeast)).